Consider the following 86-residue polypeptide: Small ribosomal subunit protein bS20 (86 aa).

Residues 1–23 (MANIKSSKKDSIKSRKKKKLNAS) are disordered.

Belongs to the bacterial ribosomal protein bS20 family.

Functionally, binds directly to 16S ribosomal RNA. The chain is Small ribosomal subunit protein bS20 from Buchnera aphidicola subsp. Baizongia pistaciae (strain Bp).